The sequence spans 219 residues: Small ribosomal subunit protein uS3c (219 aa).

Positions 47–118 constitute a KH type-2 domain; sequence IRNHVRNSSN…KLRMTLVEVL (72 aa).

Belongs to the universal ribosomal protein uS3 family. As to quaternary structure, part of the 30S ribosomal subunit.

The protein localises to the plastid. It localises to the chloroplast. The protein is Small ribosomal subunit protein uS3c (rps3) of Chara vulgaris (Common stonewort).